The chain runs to 1072 residues: MTTAPRDSVVWKLAGLLRESGDAVLSGCSTLSLLTATLQQLNRVFELYLGPWGPGQTGFVALPSHPADSPVILQLQFLFDVLQKTLSLKLVHIPGVGLPGPIKIFPFKSLRQLELRGVPIHSLCGLRGIYSQLESLVCNRSIQALEELLSACGGDLCSALPWLALLSADFSYNALRSLDSSLRLLSALRFLNLSHNHLQDCKGFLMDLCELYHLDISYNHLRLVPRVGPSGAALGTLILRANELRSLQGLEQLKNLRHLDVAYNLLEGHTELAPLWLLAELRKLYLEGNPLWFHPAHRAATAQYLSPRARDAAHGFLLDGKVLSLKDLQQTSDSSGLGPVIQPLSWPVGSTTETSGGPELSDSLSSGGIVAQAPLRKVKSRVRVRRASISEPSDTDPELRTLDPSPAGWFVQQHRELELLASFRERFGCDWLQYRSHLETMGSSPLSTTKTPALSTPPLDVQNLETVCSPPAIEDDTKESPEKVSEEGRVEPEPQEEEREEQDKEEGSREDLEEEEEQEQKAVEAELCRPMLVCPLQGLGGVQGKECFLRVTSAHLFEVELQAARTLERLELQSLVAAELESETETQGEPVSEGSGPFPGAPVLVLRFSYICPDRQLRRYAVLEPEAREAVQELLAVLTPFTSVKEQQPGANKDPQGARFQCLRCSCEFKPEESRLGLESDEGWKPLFQNTESPVVCPNCGSDHVVLLAVSGEVPNREQNQEEQSADSACDLADHGGCPSRPDGIPPQTSISHDRSSWSLSPSPGCSGFRSVDHRLRLFLDVEVFSDSEEEFQCCIKVPVVLAGHTEEFPCLVVVSNHMLYLLKVLGAICGPPASWLQPTLAIALQDLSGMELGLAGQSLRLEWAAGTGSCVLLPRDARQCRAFLEELTGVLQSLPRTQRNCISATEEEVTPQHRLWPLLGKDPSAEVPQFFYLRAFLAEGSSTCPVSLLLTLSTLYLLDEDPGGSHAESPLPVVSDETSEQPASLGPGPSLQVREQQPLSCLSSVQLYRTSPLDLRLIFYDEVSRLESFWALHVVCGEQLTALLAWIREPWEELFSIGLRTVTQEALDLDR.

LRR repeat units lie at residues 109 to 130 (SLRQLELRGVPIHSLCGLRGIY), 132 to 152 (QLESLVCNRSIQALEELLSAC), 164 to 185 (ALLSADFSYNALRSLDSSLRLL), 187 to 209 (ALRFLNLSHNHLQDCKGFLMDLC), 210 to 231 (ELYHLDISYNHLRLVPRVGPSG), 233 to 254 (ALGTLILRANELRSLQGLEQLK), 255 to 276 (NLRHLDVAYNLLEGHTELAPLW), and 280 to 301 (ELRKLYLEGNPLWFHPAHRAAT). The interval 333–366 (DSSGLGPVIQPLSWPVGSTTETSGGPELSDSLSS) is disordered. Ser-388, Ser-390, and Ser-393 each carry phosphoserine. The span at 441–454 (MGSSPLSTTKTPAL) shows a compositional bias: polar residues. 2 disordered regions span residues 441–522 (MGSS…EQKA) and 741–762 (RPDGIPPQTSISHDRSSWSLSP). Basic and acidic residues-rich tracts occupy residues 478–492 (KESPEKVSEEGRVEP) and 501–510 (EQDKEEGSRE). Phosphoserine is present on residues Ser-757, Ser-761, and Ser-763. Residues 967–993 (HAESPLPVVSDETSEQPASLGPGPSLQ) form a disordered region.

The protein belongs to the STK11IP family. In terms of assembly, found in a ternary complex composed of STK11/LKB1, STK11IP and SMAD4. Interacts with SMAD4. Interacts with STK11/LKB1.

The protein resides in the cytoplasm. May regulate STK11/LKB1 function by controlling its subcellular localization. The sequence is that of Serine/threonine-protein kinase 11-interacting protein (Stk11ip) from Mus musculus (Mouse).